A 132-amino-acid chain; its full sequence is Ribosome-binding factor A (132 aa).

Residues 113–132 (EANSTRAKDDDEADAPAKDD) form a disordered region.

It belongs to the RbfA family. As to quaternary structure, monomer. Binds 30S ribosomal subunits, but not 50S ribosomal subunits or 70S ribosomes.

The protein localises to the cytoplasm. One of several proteins that assist in the late maturation steps of the functional core of the 30S ribosomal subunit. Associates with free 30S ribosomal subunits (but not with 30S subunits that are part of 70S ribosomes or polysomes). Required for efficient processing of 16S rRNA. May interact with the 5'-terminal helix region of 16S rRNA. The protein is Ribosome-binding factor A of Burkholderia ambifaria (strain MC40-6).